Reading from the N-terminus, the 153-residue chain is Pheromone-binding protein Gp-9 (153 aa).

The signal sequence occupies residues 1-19 (MKTFVLHIFIFALVAFASA). 3 cysteine pairs are disulfide-bonded: C37/C77, C73/C129, and C118/C138.

Belongs to the PBP/GOBP family. As to quaternary structure, homodimer.

It localises to the secreted. Functionally, colony queen number, a major feature of social organization, is associated with worker genotype for Gp-9. Colonies are headed by either a single reproductive queen (monogyne form) or multiple queens (polygyne form). Differences in worker Gp-9 genotypes between social forms may cause differences in workers' abilities to recognize queens and regulate their numbers. The polypeptide is Pheromone-binding protein Gp-9 (Solenopsis sp. (strain B0-153) (Fire ant)).